The chain runs to 323 residues: MMPMFEPATPLERKRYYREEWNVRDLPDFIADNLHMREFGFDHNGRGPSDRYRVFRDERSLARFMRVRYPFAAYSSVAFYREPWKRKGWQRSELIFDVDAKDLPVRSCECDGVCPTCLDEARELVLMMVDTLKGDLGLGDIHVIYSGRGYHVRVLDPEVMELGSEVRAEILRYTAGAREPRRKFTDGVSSYEMEHFSIPLGYHRVFTERARHVLLHLRGDEDIEDVTARTVKTAVRNRNLILEDRWGEFRSVIGPRVYPRLVKGISKINMRMLDAKVTIDLKRILRLPTSLHSKVSMICMEVKNPETFDPLKSAVPRFVDERE.

Active-site residues include Asp97, Asp99, and Asp274.

The protein belongs to the eukaryotic-type primase small subunit family. In terms of assembly, heterodimer of a small subunit (PriS) and a large subunit (PriL). Mg(2+) serves as cofactor. The cofactor is Mn(2+).

Catalytic subunit of DNA primase, an RNA polymerase that catalyzes the synthesis of short RNA molecules used as primers for DNA polymerase during DNA replication. The small subunit contains the primase catalytic core and has DNA synthesis activity on its own. Binding to the large subunit stabilizes and modulates the activity, increasing the rate of DNA synthesis while decreasing the length of the DNA fragments, and conferring RNA synthesis capability. The DNA polymerase activity may enable DNA primase to also catalyze primer extension after primer synthesis. May also play a role in DNA repair. This chain is DNA primase small subunit PriS, found in Methanothermobacter thermautotrophicus (strain ATCC 29096 / DSM 1053 / JCM 10044 / NBRC 100330 / Delta H) (Methanobacterium thermoautotrophicum).